A 1177-amino-acid chain; its full sequence is Solute carrier family 9 member C1 (1177 aa).

The Extracellular portion of the chain corresponds to 1–17; that stretch reads MAGIFKEFFFSTEDLPE. A helical membrane pass occupies residues 18–37; the sequence is VILTLSLISSIGAFLNRHLE. The Cytoplasmic portion of the chain corresponds to 38–42; it reads DFPIP. The chain crosses the membrane as a helical span at residues 43–60; the sequence is VPVILFLLGCSFEVLSFT. The Extracellular segment spans residues 61-76; it reads SSQVQRYANAIQWMSP. A helical transmembrane segment spans residues 77–93; sequence DLFFRIFTPVVFFTTAF. The Cytoplasmic portion of the chain corresponds to 94–103; it reads DMDTYMLQKL. A helical transmembrane segment spans residues 104–129; sequence FWQILLISIPGFLVNYILVLWHLASV. A transport core domain region spans residues 104–191; it reads FWQILLISIP…SLITFTSIMD (88 aa). At 130 to 135 the chain is on the extracellular side; it reads NQLLLK. A helical transmembrane segment spans residues 136–161; the sequence is PTQWLLFSAILVSSDPMLTAAAIRDL. Residues 162-164 lie on the Cytoplasmic side of the membrane; the sequence is GLS. Residues 165–190 form a helical membrane-spanning segment; that stretch reads RSLISLINGESLMTSVISLITFTSIM. Over 191–204 the chain is Extracellular; that stretch reads DFDQRLQSKRNHTL. Residues 205 to 236 form a helical membrane-spanning segment; that stretch reads AEEIVGGICSYIIASFLFGILSSKLIQFWMST. Over 237 to 240 the chain is Cytoplasmic; the sequence is VFGD. A helical membrane pass occupies residues 241-262; the sequence is DVNHISLIFSILYLIFYICELV. The Extracellular segment spans residues 263–265; it reads GMS. A helical transmembrane segment spans residues 266-279; that stretch reads GIFTLAIVGLLLNS. The Cytoplasmic segment spans residues 280–286; the sequence is TSFKAAI. A helical transmembrane segment spans residues 287–319; that stretch reads EETLLLEFWTFLSRIAFLMVFTFFGLLIPAHTY. Residues 320–324 are Extracellular-facing; the sequence is LYIEF. A helical transmembrane segment spans residues 325–354; the sequence is VDIYYSLNIYLTLIVLRFLTLLLISPVLSR. The transport core domain stretch occupies residues 325–426; that stretch reads VDIYYSLNIY…FILPVAVTIL (102 aa). Residues 355–360 are Cytoplasmic-facing; sequence VGHEFS. A helical transmembrane segment spans residues 361–391; that stretch reads WRWIFIMVCSEMKGMPNINMALLLAYSDLYF. Residues 392–395 are Extracellular-facing; that stretch reads GSDK. The helical transmembrane segment at 396-426 threads the bilayer; the sequence is EKSQILFHGVLVCLITLVVNRFILPVAVTIL. Residues 427–612 lie on the Cytoplasmic side of the membrane; sequence GLRDATSTKY…ICHTIVFTEE (186 aa). The interval 598–678 is ion transport-like; it reads YFFFRICHTI…DFFSHAWNIF (81 aa). Residues 613-633 traverse the membrane as a helical segment; the sequence is FEHVGYLVILMNIFPFIISWI. Topologically, residues 634–637 are extracellular; sequence SQLN. A helical transmembrane segment spans residues 638–664; that stretch reads VIYHSELKHTNYCFLTLYILEALLKIA. Topologically, residues 665-671 are cytoplasmic; sequence AMRKDFF. The helical transmembrane segment at 672 to 696 threads the bilayer; it reads SHAWNIFELAITLIGILHVILIEID. At 697–704 the chain is on the extracellular side; that stretch reads TIKYIFNE. The helical transmembrane segment at 705–731 threads the bilayer; that stretch reads TEVIVFIKVVQFFRILRIFKLIAPKLL. At 732–1177 the chain is on the cytoplasmic side; it reads QIIDKRMSHQ…RINLRKVRKE (446 aa).

Belongs to the monovalent cation:proton antiporter 1 (CPA1) transporter (TC 2.A.36) family. Interacts with soluble adenylyl cyclase (sAC). As to expression, sperm.

Its subcellular location is the cell projection. The protein resides in the cilium. It is found in the flagellum membrane. Sperm-specific solute carrier involved in intracellular pH regulation of spermatozoa. Required for sperm motility and fertility. Involved in sperm cell hyperactivation, a step needed for sperm motility which is essential late in the preparation of sperm for fertilization. Required for the expression and bicarbonate regulation of the soluble adenylyl cyclase (sAC). The polypeptide is Solute carrier family 9 member C1 (SLC9C1) (Homo sapiens (Human)).